We begin with the raw amino-acid sequence, 184 residues long: UPF0149 protein PA14_69010 (184 aa).

Belongs to the UPF0149 family.

The protein is UPF0149 protein PA14_69010 of Pseudomonas aeruginosa (strain UCBPP-PA14).